Consider the following 101-residue polypeptide: Acylphosphatase (101 aa).

In terms of domain architecture, Acylphosphatase-like spans 13–101 (RARILVRGVV…GEFRGFEIRY (89 aa)). Catalysis depends on residues Arg-28 and Asn-46.

The protein belongs to the acylphosphatase family.

It carries out the reaction an acyl phosphate + H2O = a carboxylate + phosphate + H(+). The chain is Acylphosphatase (acyP) from Aeropyrum pernix (strain ATCC 700893 / DSM 11879 / JCM 9820 / NBRC 100138 / K1).